The sequence spans 348 residues: Pyruvate dehydrogenase E1 component subunit alpha (348 aa).

Residues 1–21 are disordered; it reads MAPRKSASVSSRKTAAKPAKK.

In terms of assembly, heterodimer of an alpha and a beta chain. It depends on thiamine diphosphate as a cofactor.

The catalysed reaction is N(6)-[(R)-lipoyl]-L-lysyl-[protein] + pyruvate + H(+) = N(6)-[(R)-S(8)-acetyldihydrolipoyl]-L-lysyl-[protein] + CO2. Its function is as follows. The pyruvate dehydrogenase complex catalyzes the overall conversion of pyruvate to acetyl-CoA and CO(2). It contains multiple copies of three enzymatic components: pyruvate dehydrogenase (E1), dihydrolipoamide acetyltransferase (E2) and lipoamide dehydrogenase (E3). The chain is Pyruvate dehydrogenase E1 component subunit alpha (pdhA) from Rhizobium meliloti (strain 1021) (Ensifer meliloti).